Reading from the N-terminus, the 593-residue chain is Thiol:disulfide interchange protein DsbD (593 aa).

The N-terminal stretch at 1 to 21 is a signal peptide; that stretch reads MRALLTFFVAGLLVLSSPAMA. Disulfide bonds link cysteine 130–cysteine 136 and cysteine 207–cysteine 328. A run of 8 helical transmembrane segments spans residues 193–215, 235–257, 269–291, 318–340, 347–369, 384–401, 408–425, and 440–462; these read LLFLALGVGLAFTPCVLPMYPIL, LVYVQGMALTYTLLGLVVASAGL, LIGLSILFVTLALSMFGVYTLQL, GAISGLVCSPCTTAPLSGALLYV, LTGGVALYALAMGMGIPLILVAV, RVKTLFGFVLLAAPIFLL, MWSTALWSALGIAAFGWL, and SAVGIIAVLGLFASAQPALNYWF. The region spanning 451–593 is the Thioredoxin domain; it reads FASAQPALNY…FLEHIQRISN (143 aa). The cysteines at positions 508 and 511 are disulfide-linked.

It belongs to the thioredoxin family. DsbD subfamily.

The protein localises to the cell inner membrane. The catalysed reaction is [protein]-dithiol + NAD(+) = [protein]-disulfide + NADH + H(+). It catalyses the reaction [protein]-dithiol + NADP(+) = [protein]-disulfide + NADPH + H(+). Required to facilitate the formation of correct disulfide bonds in some periplasmic proteins and for the assembly of the periplasmic c-type cytochromes. Acts by transferring electrons from cytoplasmic thioredoxin to the periplasm. This transfer involves a cascade of disulfide bond formation and reduction steps. The polypeptide is Thiol:disulfide interchange protein DsbD (Vibrio vulnificus (strain CMCP6)).